The sequence spans 174 residues: Centrosomal protein 20 (174 aa).

The segment at 1 to 104 is necessary and sufficient for homooligomerization and localization to centrosomes and pericentriolar satellites; the sequence is MATVAELKAV…AFEESKDNTI (104 aa). The LisH domain maps to 49-81; that stretch reads ENLLINELIREYLEFNKYKYTASVLIAESGQPV. The tract at residues 129 to 174 is disordered; sequence GPSLQPSDPSLGRQPSRRKPMDDHLRKEEQKSTNIEDLHVSQAVNR. A Phosphoserine modification is found at Ser144. The span at 147–167 shows a compositional bias: basic and acidic residues; sequence KPMDDHLRKEEQKSTNIEDLH.

It belongs to the CEP43 family. Homooligomer; probably required for localization to centrosomes. Forms a complex with KIAA0753/OFIP and OFD1; within this complex may stabilize the interaction between OFD1 and KIAA0753/OFIP. Interacts with PCM1; this interaction may be mediated by KIAA0753/OFIP. Interacts with PLK1 in later G1, S, G2 and M phases of the cell cycle; this interaction recruits PLK1 to centrosomes. In terms of tissue distribution, widely expressed. Detected in brain, heart, kidney, liver, lung, skeletal muscle, placenta and intestine.

The protein resides in the cytoplasm. It localises to the cytoskeleton. It is found in the microtubule organizing center. Its subcellular location is the centrosome. The protein localises to the centriole. The protein resides in the cell projection. It localises to the cilium. It is found in the cilium basal body. Its subcellular location is the cytoplasmic granule. The protein localises to the centriolar satellite. Its function is as follows. Involved in the biogenesis of cilia. Required for the recruitment of PLK1 to centrosomes and S phase progression. In Homo sapiens (Human), this protein is Centrosomal protein 20.